The sequence spans 412 residues: MNLKQELIERFTRYVKIDTQSNEESHTVPTTPGQIEFGKLLVEELKEIGLTEVTMDDNGYVMATLPANTDKDVPVIGFLAHLDTATDFTGKNVKPQIHENFDGNAITLNEELNVVLTPEQFPELPSYKGHTIITTDGTTLLGADDKAGLTEIMVAMNHLIHNPQIKHGKIRVAFTPDEEIGRGPAHFDVEAFGASFAYTMDGGPLGGLEYESFNAAGAKLTFNGTNTHPGTAKNKMRNATKLAMEFNGYLPVEDAPEYTEGYEGFYHLLSLNGDVEQSKAYYIIRDFDRENFEARKNNVKNIVKTMQEKYGEDAVVLEMNDQYYNMLEKIEPVREIVDIAYEAMKSLDIEPNIHPIRGGTDGSQLSYMGLPTPNIFTGGENYHGKFEYVSVDTMEKAVQVIVEIARRFEEQA.

His-81 serves as a coordination point for Zn(2+). Asp-83 is an active-site residue. Asp-144 is a binding site for Zn(2+). The active-site Proton acceptor is Glu-178. 3 residues coordinate Zn(2+): Glu-179, Asp-201, and His-383.

It belongs to the peptidase M20B family. Requires Zn(2+) as cofactor.

Its subcellular location is the cytoplasm. The catalysed reaction is Release of the N-terminal residue from a tripeptide.. Its function is as follows. Cleaves the N-terminal amino acid of tripeptides. In Bacillus cereus (strain ATCC 14579 / DSM 31 / CCUG 7414 / JCM 2152 / NBRC 15305 / NCIMB 9373 / NCTC 2599 / NRRL B-3711), this protein is Peptidase T.